We begin with the raw amino-acid sequence, 497 residues long: Validamine 7-phosphate valienyltransferase (497 aa).

A GDP-valienol-binding site is contributed by D158. A validamine 7-phosphate-binding site is contributed by H182. GDP-valienol contacts are provided by residues R290, K295, R321, 325–326 (NR), 361–362 (ND), and T366. 383–386 (DGQN) serves as a coordination point for validamine 7-phosphate. GDP-valienol contacts are provided by residues 387–388 (LS) and E391.

Belongs to the glycosyltransferase 20 family. As to quaternary structure, homodimer.

It catalyses the reaction validamine 7-phosphate + GDP-valienol = validoxylamine A 7'-phosphate + GDP + H(+). Functionally, involved in the biosynthesis of the antifungal agent validamycin A. Catalyzes the condensation between GDP-valienol and validamine 7-phosphate via a nonglycosidic C-N bond formation to yield validoxylamine A 7'-phosphate. This chain is Validamine 7-phosphate valienyltransferase, found in Streptomyces hygroscopicus subsp. limoneus.